The sequence spans 383 residues: AP-1-like transcription factor YAP6 (383 aa).

Disordered regions lie at residues 1–64, 83–113, and 168–239; these read MQNP…ISVN, DYRS…SYNR, and TLPS…KAFR. Residues 13 to 64 show a composition bias toward polar residues; the sequence is NQGSSSMATYNASEKNLNEHPSPQIAQPSTSQKLPYRINPTTTNGDTDISVN. Residues 88-101 show a composition bias toward low complexity; the sequence is HQSPIHPSYIIPPH. Over residues 168-184 the composition is skewed to polar residues; it reads TLPSRNTSVTTAPPSFQ. Over residues 185 to 206 the composition is skewed to low complexity; sequence NSADTAKNSADNNDNNDNVTKP. The segment covering 213-222 has biased composition (polar residues); that stretch reads QLISSSGKTL. One can recognise a bZIP domain in the interval 221 to 284; that stretch reads TLRNTRRAAQ…NDNNILIAQH (64 aa). Positions 223-247 are basic motif; the sequence is RNTRRAAQNRTAQKAFRQRKEKYIK. Residues 227–237 are compositionally biased toward low complexity; sequence RAAQNRTAQKA. The leucine-zipper stretch occupies residues 249 to 277; the sequence is LEQKSKIFDDLLAENNNFKSLNDSLRNDN.

It belongs to the bZIP family. YAP subfamily. Homodimer.

Its subcellular location is the nucleus. In terms of biological role, transcription activator involved in the regulation of genes expressed in response to environmental changes and metabolic requirements. According to genome-wide promoter binding and gene expression studies it regulates, among others, genes involved in ribosome biogenesis, protein synthesis, carbohydrate metabolism, and carbohydrate transport. It may also be involved in pleiotropic drug resistance. When overexpressed, it confers resistance to cisplatin, methylmethanosulfonate, and mitomycin C, and increases cellular tolerance to sodium and lithium. The sequence is that of AP-1-like transcription factor YAP6 (YAP6) from Saccharomyces cerevisiae (strain ATCC 204508 / S288c) (Baker's yeast).